A 95-amino-acid chain; its full sequence is Putative ESAT-6-like protein X (95 aa).

Residues 72–95 (HGQKVQRASSSMADTDRSVSSAWS) form a disordered region.

Belongs to the WXG100 family.

This is Putative ESAT-6-like protein X from Mycobacterium leprae (strain TN).